Reading from the N-terminus, the 79-residue chain is Translational regulator CsrA (79 aa).

The protein belongs to the CsrA/RsmA family. In terms of assembly, homodimer; the beta-strands of each monomer intercalate to form a hydrophobic core, while the alpha-helices form wings that extend away from the core.

The protein resides in the cytoplasm. In terms of biological role, a translational regulator that binds mRNA to regulate translation initiation and/or mRNA stability. Usually binds in the 5'-UTR at or near the Shine-Dalgarno sequence preventing ribosome-binding, thus repressing translation. Its main target seems to be the major flagellin gene, while its function is anatagonized by FliW. This is Translational regulator CsrA from Leptospira biflexa serovar Patoc (strain Patoc 1 / Ames).